The primary structure comprises 488 residues: Envelope glycoprotein gp62 (488 aa).

The signal sequence occupies residues 1–20; sequence MGKFLATLILFFQFCPLIFG. At 21 to 442 the chain is on the extracellular side; it reads DYSPSCCTLT…LGLSQWAREA (422 aa). N-linked (GlcNAc...) asparagine; by host glycosylation is found at asparagine 140 and asparagine 222. Residues 225–228 carry the CXXC motif; that stretch reads CIVC. Residues asparagine 244 and asparagine 272 are each glycosylated (N-linked (GlcNAc...) asparagine; by host). Residues 313 to 333 form a fusion peptide region; sequence AVPVAVWLVSALAMGAGVAGG. Coiled-coil stretches lie at residues 341-387 and 397-429; these read ASGK…LLFW and QEQC…GWGL. The segment at 376–392 is immunosuppression; it reads AQNRRGLDLLFWEQGGL. Cysteines 393 and 400 form a disulfide. The N-linked (GlcNAc...) asparagine; by host glycan is linked to asparagine 404. The helical transmembrane segment at 443–463 threads the bilayer; that stretch reads LQTGITLVALLLLVILAGPCI. Residue cysteine 462 is the site of S-palmitoyl cysteine; by host attachment. The Cytoplasmic segment spans residues 464–488; the sequence is LRQLRHLPSRVRYPHYSLIKPESSL.

The mature envelope protein (Env) consists of a trimer of SU-TM heterodimers attached by non-covalent interactions or by a labile interchain disulfide bond. Specific enzymatic cleavages in vivo yield mature proteins. Envelope glycoproteins are synthesized as an inactive precursor that is N-glycosylated and processed likely by host cell furin or by a furin-like protease in the Golgi to yield the mature SU and TM proteins. The cleavage site between SU and TM requires the minimal sequence [KR]-X-[KR]-R. Post-translationally, the transmembrane protein is palmitoylated.

It is found in the virion membrane. Its subcellular location is the host cell membrane. Functionally, the surface protein (SU) attaches the virus to the host cell by binding to its receptor. This interaction triggers the refolding of the transmembrane protein (TM) and is thought to activate its fusogenic potential by unmasking its fusion peptide. Fusion occurs at the host cell plasma membrane. In terms of biological role, the transmembrane protein (TM) acts as a class I viral fusion protein. Under the current model, the protein has at least 3 conformational states: pre-fusion native state, pre-hairpin intermediate state, and post-fusion hairpin state. During viral and target cell membrane fusion, the coiled coil regions (heptad repeats) assume a trimer-of-hairpins structure, positioning the fusion peptide in close proximity to the C-terminal region of the ectodomain. The formation of this structure appears to drive apposition and subsequent fusion of viral and target cell membranes. Membranes fusion leads to delivery of the nucleocapsid into the cytoplasm. The polypeptide is Envelope glycoprotein gp62 (env) (Homo sapiens (Human)).